Here is a 95-residue protein sequence, read N- to C-terminus: Small ribosomal subunit protein uS19 (95 aa).

It belongs to the universal ribosomal protein uS19 family.

Its function is as follows. Protein S19 forms a complex with S13 that binds strongly to the 16S ribosomal RNA. The polypeptide is Small ribosomal subunit protein uS19 (Thermosipho africanus (strain TCF52B)).